Consider the following 369-residue polypeptide: Peptide chain release factor 1 (369 aa).

Gln238 bears the N5-methylglutamine mark.

This sequence belongs to the prokaryotic/mitochondrial release factor family. Methylated by PrmC. Methylation increases the termination efficiency of RF1.

It localises to the cytoplasm. Functionally, peptide chain release factor 1 directs the termination of translation in response to the peptide chain termination codons UAG and UAA. The protein is Peptide chain release factor 1 of Parabacteroides distasonis (strain ATCC 8503 / DSM 20701 / CIP 104284 / JCM 5825 / NCTC 11152).